The primary structure comprises 234 residues: Phosphoribosylaminoimidazole-succinocarboxamide synthase (234 aa).

Belongs to the SAICAR synthetase family.

The enzyme catalyses 5-amino-1-(5-phospho-D-ribosyl)imidazole-4-carboxylate + L-aspartate + ATP = (2S)-2-[5-amino-1-(5-phospho-beta-D-ribosyl)imidazole-4-carboxamido]succinate + ADP + phosphate + 2 H(+). Its pathway is purine metabolism; IMP biosynthesis via de novo pathway; 5-amino-1-(5-phospho-D-ribosyl)imidazole-4-carboxamide from 5-amino-1-(5-phospho-D-ribosyl)imidazole-4-carboxylate: step 1/2. The chain is Phosphoribosylaminoimidazole-succinocarboxamide synthase from Streptococcus pyogenes serotype M1.